The primary structure comprises 373 residues: DNA replication and repair protein RecF (373 aa).

30–37 (GENAQGKT) is a binding site for ATP.

This sequence belongs to the RecF family.

The protein localises to the cytoplasm. The RecF protein is involved in DNA metabolism; it is required for DNA replication and normal SOS inducibility. RecF binds preferentially to single-stranded, linear DNA. It also seems to bind ATP. In Limosilactobacillus fermentum (strain NBRC 3956 / LMG 18251) (Lactobacillus fermentum), this protein is DNA replication and repair protein RecF.